The sequence spans 345 residues: D-erythrose-4-phosphate dehydrogenase (345 aa).

An NAD(+)-binding site is contributed by 11 to 12 (RI). Substrate-binding positions include 158 to 160 (SCT), R204, 217 to 218 (TK), and R240. Residue C159 is the Nucleophile of the active site. N322 contributes to the NAD(+) binding site.

The protein belongs to the glyceraldehyde-3-phosphate dehydrogenase family. Epd subfamily. In terms of assembly, homotetramer.

It localises to the cytoplasm. The catalysed reaction is D-erythrose 4-phosphate + NAD(+) + H2O = 4-phospho-D-erythronate + NADH + 2 H(+). It functions in the pathway cofactor biosynthesis; pyridoxine 5'-phosphate biosynthesis; pyridoxine 5'-phosphate from D-erythrose 4-phosphate: step 1/5. In terms of biological role, catalyzes the NAD-dependent conversion of D-erythrose 4-phosphate to 4-phosphoerythronate. This chain is D-erythrose-4-phosphate dehydrogenase, found in Vibrio campbellii (strain ATCC BAA-1116).